Consider the following 464-residue polypeptide: Probable multidrug resistance protein NorM (464 aa).

A run of 12 helical transmembrane segments spans residues 22–42, 64–84, 104–124, 142–162, 172–192, 204–224, 258–278, 288–308, 326–346, 358–378, 384–404, and 410–430; these read LIKL…FGMA, VFWV…VTIA, FLAI…DVLI, LKVI…SAML, MIVT…MIFG, AAVA…YVIF, FVFS…GAEA, VESL…TLVG, GWIL…LFPE, IIEI…FLAI, GALR…ISIW, and VAFV…IGMI.

Belongs to the multi antimicrobial extrusion (MATE) (TC 2.A.66.1) family.

It localises to the cell membrane. In terms of biological role, multidrug efflux pump. The protein is Probable multidrug resistance protein NorM (norM) of Thermotoga maritima (strain ATCC 43589 / DSM 3109 / JCM 10099 / NBRC 100826 / MSB8).